The sequence spans 209 residues: Uracil phosphoribosyltransferase (209 aa).

5-phospho-alpha-D-ribose 1-diphosphate is bound by residues R79, R104, and 131-139 (DPMLATGGS). Residues V194 and 199 to 201 (GDA) contribute to the uracil site. Position 200 (D200) interacts with 5-phospho-alpha-D-ribose 1-diphosphate.

It belongs to the UPRTase family. It depends on Mg(2+) as a cofactor.

The catalysed reaction is UMP + diphosphate = 5-phospho-alpha-D-ribose 1-diphosphate + uracil. It participates in pyrimidine metabolism; UMP biosynthesis via salvage pathway; UMP from uracil: step 1/1. Allosterically activated by GTP. In terms of biological role, catalyzes the conversion of uracil and 5-phospho-alpha-D-ribose 1-diphosphate (PRPP) to UMP and diphosphate. The sequence is that of Uracil phosphoribosyltransferase from Bacillus cytotoxicus (strain DSM 22905 / CIP 110041 / 391-98 / NVH 391-98).